The primary structure comprises 324 residues: UDP-galactose transporter homolog 1 (324 aa).

A run of 2 helical transmembrane segments spans residues 7-27 (LVIAVCGIYATFLTWSLAQEP) and 42-62 (HSSFIVLCQALTAAVVGLCYL). N-linked (GlcNAc...) asparagine glycosylation is present at Asn-97. 7 helical membrane-spanning segments follow: residues 106-126 (VGYMLAKSCKLLPIMLVHVLV), 135-155 (KALVGVLVSGGVALFTLGGAE), 161-181 (ASLYGLGMLLVSLFLDGLTNA), 199-219 (HLMVALNTAIVLWNLAYLVLF), 237-257 (ILTYLFTYCACGALGQCFVFF), 265-285 (LVLATVTVTRKMVSMLLSIVV), and 290-310 (VRPVQWLGILVVFGGIIWETV).

Belongs to the nucleotide-sugar transporter family. SLC35B subfamily.

Its subcellular location is the endoplasmic reticulum membrane. May be involved in specific transport of UDP-Gal from the cytosol to the Golgi lumen. Involved in the maintenance of optimal conditions for the folding of secretory pathway proteins in the endoplasmic reticulum. The polypeptide is UDP-galactose transporter homolog 1 (HUT1) (Eremothecium gossypii (strain ATCC 10895 / CBS 109.51 / FGSC 9923 / NRRL Y-1056) (Yeast)).